A 361-amino-acid polypeptide reads, in one-letter code: 3-dehydroquinate synthase (361 aa).

It belongs to the archaeal-type DHQ synthase family.

The catalysed reaction is 2-amino-2,3,7-trideoxy-D-lyxo-hept-6-ulosonate + NAD(+) + H2O = 3-dehydroquinate + NH4(+) + NADH + H(+). Its function is as follows. Catalyzes the oxidative deamination and cyclization of 2-amino-3,7-dideoxy-D-threo-hept-6-ulosonic acid (ADH) to yield 3-dehydroquinate (DHQ), which is fed into the canonical shikimic pathway of aromatic amino acid biosynthesis. In Methanococcus maripaludis (strain C7 / ATCC BAA-1331), this protein is 3-dehydroquinate synthase.